Reading from the N-terminus, the 1914-residue chain is Diacylglycerol kinase eta (1914 aa).

A compositionally biased stretch (basic and acidic residues) spans 1–10 (MSHLKLDTLH). The interval 1–37 (MSHLKLDTLHVQRSPRGSRRSSRSSGRSSACSSGSIS) is disordered. The segment covering 23 to 37 (RSSGRSSACSSGSIS) has biased composition (low complexity). Residues 82-175 (AIIKEGFLLK…WLGSLKTATA (94 aa)) enclose the PH domain. 2 Phorbol-ester/DAG-type zinc fingers span residues 195 to 245 (HHHW…IANC) and 268 to 319 (PHQW…AVAC). The DAGKc domain occupies 350 to 486 (GNFSPLLVFV…DRWSIMVFEK (137 aa)). 5 disordered regions span residues 621 to 642 (EKDQ…SEKE), 783 to 805 (GANI…NTPT), 1016 to 1053 (TLCS…PPRI), 1116 to 1135 (QHRG…TPTN), and 1175 to 1216 (PNTI…TVSL). Residues 1175–1187 (PNTILTTSTSPTK) show a composition bias toward polar residues. One can recognise an SAM domain in the interval 1851 to 1914 (WSVNEVVTWL…LQAIKDLSEN (64 aa)).

It belongs to the eukaryotic diacylglycerol kinase family.

It localises to the cytoplasm. It carries out the reaction a 1,2-diacyl-sn-glycerol + ATP = a 1,2-diacyl-sn-glycero-3-phosphate + ADP + H(+). Its function is as follows. Phosphorylates diacylglycerol (DAG) to generate phosphatidic acid (PA). The protein is Diacylglycerol kinase eta of Drosophila sechellia (Fruit fly).